The primary structure comprises 131 residues: MPPKGKSGSGKGGKGGAASGSDSADKKSQGPKGGGNAVKVRHILCEKHGKIMEAMEKLKSGMRFSEVATQYSEDKARQGGDLGWMTRGSMVGPFQEAAFALPVSGMDKPVFTDPPVKTKFGYHIIMVEGRK.

Positions Met-1–Asp-25 are necessary for nuclear localization and DNA-binding. The tract at residues Met-1–Lys-39 is disordered. The segment at Met-1–Arg-41 is necessary for association with the pre-rRNP complexes. A compositionally biased stretch (gly residues) spans Ser-7 to Ala-18. Ser-19 is subject to Phosphoserine; by CK2. The region spanning Gly-35–Gly-129 is the PpiC domain.

This sequence belongs to the PpiC/parvulin rotamase family. PIN4 subfamily. As to quaternary structure, found in pre-ribosomal ribonucleoprotein (pre-rRNP) complexes. Post-translationally, phosphorylated. Phosphorylation occurs both in the nucleus and the cytoplasm. Phosphorylation at Ser-19 does not affect its PPIase activity but is required for nuclear localization, and the dephosphorylation is a prerequisite for the binding to DNA. The unphosphorylated form associates with the pre-rRNP complexes in the nucleus.

It is found in the nucleus. The protein localises to the nucleolus. The protein resides in the cytoplasm. Its subcellular location is the cytoskeleton. It localises to the spindle. The catalysed reaction is [protein]-peptidylproline (omega=180) = [protein]-peptidylproline (omega=0). Its function is as follows. Involved as a ribosomal RNA processing factor in ribosome biogenesis. Binds to tightly bent AT-rich stretches of double-stranded DNA. The sequence is that of Peptidyl-prolyl cis-trans isomerase NIMA-interacting 4 (Pin4) from Mus musculus (Mouse).